We begin with the raw amino-acid sequence, 79 residues long: Small ribosomal subunit protein bS18c (79 aa).

This sequence belongs to the bacterial ribosomal protein bS18 family. In terms of assembly, part of the 30S ribosomal subunit.

Its subcellular location is the plastid. It localises to the chloroplast. This is Small ribosomal subunit protein bS18c from Physcomitrium patens (Spreading-leaved earth moss).